The primary structure comprises 265 residues: Glutamate racemase (265 aa).

Substrate contacts are provided by residues 12 to 13 (DS) and 44 to 45 (YG). Residue cysteine 75 is the Proton donor/acceptor of the active site. 76 to 77 (NT) provides a ligand contact to substrate. Catalysis depends on cysteine 186, which acts as the Proton donor/acceptor. 187-188 (TH) serves as a coordination point for substrate.

This sequence belongs to the aspartate/glutamate racemases family.

It catalyses the reaction L-glutamate = D-glutamate. It functions in the pathway cell wall biogenesis; peptidoglycan biosynthesis. Provides the (R)-glutamate required for cell wall biosynthesis. The protein is Glutamate racemase of Pseudomonas aeruginosa (strain UCBPP-PA14).